The sequence spans 92 residues: Small ribosomal subunit protein uS19 (92 aa).

Belongs to the universal ribosomal protein uS19 family.

In terms of biological role, protein S19 forms a complex with S13 that binds strongly to the 16S ribosomal RNA. The protein is Small ribosomal subunit protein uS19 of Nostoc sp. (strain PCC 7120 / SAG 25.82 / UTEX 2576).